The chain runs to 354 residues: Adenine deaminase (354 aa).

Residues His-20, His-22, and His-200 each contribute to the Zn(2+) site. Glu-203 functions as the Proton donor in the catalytic mechanism. Residue Asp-281 coordinates Zn(2+). Asp-282 serves as a coordination point for substrate.

The protein belongs to the metallo-dependent hydrolases superfamily. Adenosine and AMP deaminases family. Adenine deaminase type 2 subfamily. The cofactor is Zn(2+).

The enzyme catalyses adenine + H2O + H(+) = hypoxanthine + NH4(+). Its function is as follows. Catalyzes the hydrolytic deamination of adenine to hypoxanthine. Plays an important role in the purine salvage pathway and in nitrogen catabolism. This is Adenine deaminase from Cupriavidus metallidurans (strain ATCC 43123 / DSM 2839 / NBRC 102507 / CH34) (Ralstonia metallidurans).